Here is a 718-residue protein sequence, read N- to C-terminus: NF-kappa-B inhibitor zeta (718 aa).

Residues 1–17 are compositionally biased toward basic and acidic residues; it reads MIVDKLLDDSRGGEGLR. Disordered stretches follow at residues 1 to 20 and 58 to 108; these read MIVD…RDAA and SAPG…RQQR. Low complexity predominate over residues 58-83; the sequence is SAPGSPGSDSSDFSSASSVSSCGAVE. The span at 84–97 shows a compositional bias: basic and acidic residues; it reads SRSRGGARAERQPV. An OCA domain is found at 108–130; sequence RGPFQGVRVKNSVKELLLHIRSH. A Nuclear localization signal motif is present at residues 164 to 179; the sequence is KRKGPDSLSDGPACKR. The disordered stretch occupies residues 186–211; that stretch reads QFLTPPQTPTPGESMEDVHLNEPKQE. The span at 201-211 shows a compositional bias: basic and acidic residues; sequence EDVHLNEPKQE. Residues 321-394 are required for transcriptional activity; the sequence is AYEPNLFDGP…MVGHEMASDS (74 aa). An interaction with NFKB1/p50 region spans residues 404–718; the sequence is MGNPMNTTQL…KSIQQRAPPY (315 aa). ANK repeat units follow at residues 443–472, 479–508, 512–541, 551–580, 582–607, 612–641, and 648–681; these read DGDT…ALHM, NGQS…QVNT, WGRT…GSNQ, DGLT…HSPE, QELL…AVEA, SGRT…CLSF, and NGNT…DPST.

In terms of assembly, interacts with NFKB1/p50. Interacts with RELA. Interacts with AKIRIN2. In terms of tissue distribution, expressed at high levels in peripheral blood leukocytes and lung, at moderate levels in liver, placenta, and at low levels in spleen, kidney, skeletal muscle and heart.

It localises to the nucleus. Involved in regulation of NF-kappa-B transcription factor complexes. Inhibits NF-kappa-B activity without affecting its nuclear translocation upon stimulation. Inhibits DNA-binding of RELA and NFKB1/p50, and of the NF-kappa-B p65-p50 heterodimer and the NF-kappa-B p50-p50 homodimer. Also seems to activate NF-kappa-B-mediated transcription. In vitro, upon association with NFKB1/p50 has transcriptional activation activity and, together with NFKB1/p50 and RELA, is recruited to LCN2 promoters. Promotes transcription of LCN2 and DEFB4. Is recruited to IL-6 promoters and activates IL-6 but decreases TNF-alpha production in response to LPS. Seems to be involved in the induction of inflammatory genes activated through TLR/IL-1 receptor signaling. Involved in the induction of T helper 17 cells (Th17) differentiation upon recognition of antigen by T cell antigen receptor (TCR). The sequence is that of NF-kappa-B inhibitor zeta (NFKBIZ) from Homo sapiens (Human).